Here is a 352-residue protein sequence, read N- to C-terminus: Glycerol-1-phosphate dehydrogenase [NAD(P)+] (352 aa).

Residues 98–102 (GKAID) and 120–123 (TAAS) each bind NAD(+). Aspartate 125 contributes to the substrate binding site. Serine 129 serves as a coordination point for NAD(+). Aspartate 172 contributes to the substrate binding site. The Zn(2+) site is built by aspartate 172 and histidine 252. Substrate is bound at residue histidine 256. Zn(2+) is bound at residue histidine 268.

Belongs to the glycerol-1-phosphate dehydrogenase family. The cofactor is Zn(2+).

It localises to the cytoplasm. It catalyses the reaction sn-glycerol 1-phosphate + NAD(+) = dihydroxyacetone phosphate + NADH + H(+). The enzyme catalyses sn-glycerol 1-phosphate + NADP(+) = dihydroxyacetone phosphate + NADPH + H(+). It participates in membrane lipid metabolism; glycerophospholipid metabolism. Functionally, catalyzes the NAD(P)H-dependent reduction of dihydroxyacetonephosphate (DHAP or glycerone phosphate) to glycerol 1-phosphate (G1P). The G1P thus generated is used as the glycerophosphate backbone of phospholipids in the cellular membranes of Archaea. In Halobacterium salinarum (strain ATCC 29341 / DSM 671 / R1), this protein is Glycerol-1-phosphate dehydrogenase [NAD(P)+].